Here is a 245-residue protein sequence, read N- to C-terminus: Biosynthetic peptidoglycan transglycosylase (245 aa).

A helical membrane pass occupies residues 19–39 (IVYAGAVFAAAWLATQLFYFV).

Belongs to the glycosyltransferase 51 family.

Its subcellular location is the cell inner membrane. The catalysed reaction is [GlcNAc-(1-&gt;4)-Mur2Ac(oyl-L-Ala-gamma-D-Glu-L-Lys-D-Ala-D-Ala)](n)-di-trans,octa-cis-undecaprenyl diphosphate + beta-D-GlcNAc-(1-&gt;4)-Mur2Ac(oyl-L-Ala-gamma-D-Glu-L-Lys-D-Ala-D-Ala)-di-trans,octa-cis-undecaprenyl diphosphate = [GlcNAc-(1-&gt;4)-Mur2Ac(oyl-L-Ala-gamma-D-Glu-L-Lys-D-Ala-D-Ala)](n+1)-di-trans,octa-cis-undecaprenyl diphosphate + di-trans,octa-cis-undecaprenyl diphosphate + H(+). Its pathway is cell wall biogenesis; peptidoglycan biosynthesis. In terms of biological role, peptidoglycan polymerase that catalyzes glycan chain elongation from lipid-linked precursors. This Burkholderia multivorans (strain ATCC 17616 / 249) protein is Biosynthetic peptidoglycan transglycosylase.